The following is a 312-amino-acid chain: GATA transcription factor 6 (312 aa).

Disordered regions lie at residues Met-1–Leu-33, Gln-56–Asp-77, and Lys-136–Leu-186. The segment covering Gln-56–Asn-71 has biased composition (basic and acidic residues). The segment covering Val-142–Thr-151 has biased composition (basic residues). Positions Lys-143–Arg-150 match the Nuclear localization signal motif. Residues Ser-157 to Leu-186 are compositionally biased toward low complexity. A GATA-type zinc finger spans residues Gln-217 to Ser-271.

Belongs to the type IV zinc-finger family. Class A subfamily.

Its subcellular location is the nucleus. Functionally, transcriptional activator that specifically binds 5'-GATA-3' or 5'-GAT-3' motifs within gene promoters. May be involved in the regulation of some light-responsive genes. This is GATA transcription factor 6 (GATA6) from Arabidopsis thaliana (Mouse-ear cress).